Reading from the N-terminus, the 453-residue chain is Trigger factor (453 aa).

Residues 171–256 (GDRVTVSFKG…ATLVEAPKDT (86 aa)) form the PPIase FKBP-type domain.

It belongs to the FKBP-type PPIase family. Tig subfamily.

Its subcellular location is the cytoplasm. It catalyses the reaction [protein]-peptidylproline (omega=180) = [protein]-peptidylproline (omega=0). Its function is as follows. Involved in protein export. Acts as a chaperone by maintaining the newly synthesized protein in an open conformation. Functions as a peptidyl-prolyl cis-trans isomerase. This is Trigger factor from Rhodopseudomonas palustris (strain BisA53).